A 363-amino-acid polypeptide reads, in one-letter code: NAD(P)H-quinone oxidoreductase subunit 1, chloroplastic (363 aa).

The next 8 helical transmembrane spans lie at 26-46 (FVWI…GVLV), 96-116 (WLFA…FLVI), 127-147 (ISIG…GLLV), 175-195 (LALC…IEIV), 203-223 (ILGW…ISAL), 253-273 (FGLF…FVTI), 303-323 (GLIA…ASIL), and 343-363 (FLLP…LALL).

The protein belongs to the complex I subunit 1 family. NDH is composed of at least 16 different subunits, 5 of which are encoded in the nucleus.

It localises to the plastid. The protein localises to the chloroplast thylakoid membrane. It carries out the reaction a plastoquinone + NADH + (n+1) H(+)(in) = a plastoquinol + NAD(+) + n H(+)(out). It catalyses the reaction a plastoquinone + NADPH + (n+1) H(+)(in) = a plastoquinol + NADP(+) + n H(+)(out). NDH shuttles electrons from NAD(P)H:plastoquinone, via FMN and iron-sulfur (Fe-S) centers, to quinones in the photosynthetic chain and possibly in a chloroplast respiratory chain. The immediate electron acceptor for the enzyme in this species is believed to be plastoquinone. Couples the redox reaction to proton translocation, and thus conserves the redox energy in a proton gradient. The polypeptide is NAD(P)H-quinone oxidoreductase subunit 1, chloroplastic (Zygnema circumcarinatum (Green alga)).